The sequence spans 270 residues: Thymidine kinase 2, mitochondrial (270 aa).

A mitochondrion-targeting transit peptide spans 1–38 (MLLRSLRSWAARSPRSVGPGSSGSPGSLDSGAGPLWAP). The disordered stretch occupies residues 1-54 (MLLRSLRSWAARSPRSVGPGSSGSPGSLDSGAGPLWAPRRAWPPDKDRENDKEK). The segment covering 13-34 (SPRSVGPGSSGSPGSLDSGAGP) has biased composition (low complexity). The span at 42–54 (WPPDKDRENDKEK) shows a compositional bias: basic and acidic residues. 62–70 (GNIASGKTT) lines the ATP pocket. Catalysis depends on E138, which acts as the Proton acceptor.

The protein belongs to the DCK/DGK family. In terms of assembly, homodimer. Found in most tissues; highly expressed in liver.

Its subcellular location is the mitochondrion. The catalysed reaction is thymidine + ATP = dTMP + ADP + H(+). The enzyme catalyses 2'-deoxycytidine + ATP = dCMP + ADP + H(+). It carries out the reaction 2'-deoxyuridine + ATP = dUMP + ADP + H(+). Phosphorylates thymidine, deoxycytidine, and deoxyuridine in the mitochondrial matrix. In non-replicating cells, where cytosolic dNTP synthesis is down-regulated, mtDNA synthesis depends solely on TK2 and DGUOK. This chain is Thymidine kinase 2, mitochondrial (Tk2), found in Mus musculus (Mouse).